Here is a 363-residue protein sequence, read N- to C-terminus: Alanine racemase (363 aa).

Lys35 (proton acceptor; specific for D-alanine) is an active-site residue. Lys35 carries the post-translational modification N6-(pyridoxal phosphate)lysine. Arg134 is a binding site for substrate. Tyr259 acts as the Proton acceptor; specific for L-alanine in catalysis. Met307 contacts substrate.

This sequence belongs to the alanine racemase family. Pyridoxal 5'-phosphate serves as cofactor.

The enzyme catalyses L-alanine = D-alanine. The protein operates within amino-acid biosynthesis; D-alanine biosynthesis; D-alanine from L-alanine: step 1/1. Its function is as follows. Catalyzes the interconversion of L-alanine and D-alanine. May also act on other amino acids. The sequence is that of Alanine racemase (alr) from Shewanella denitrificans (strain OS217 / ATCC BAA-1090 / DSM 15013).